The primary structure comprises 331 residues: N-arachidonyl glycine receptor (331 aa).

Residues 1-26 are Extracellular-facing; sequence MATLSNHNQLDLSNGSHPEEYKIAAL. The N-linked (GlcNAc...) asparagine glycan is linked to Asn14. A helical transmembrane segment spans residues 27 to 47; it reads VFYSCIFLIGLFVNVTALWVF. Residues 48 to 56 are Cytoplasmic-facing; sequence SCTTKKRTT. The helical transmembrane segment at 57–77 threads the bilayer; the sequence is VTIYMMNVALLDLVFILSLPF. Residues 78 to 95 are Extracellular-facing; the sequence is RMFYYAKGEWPFGEYFCH. Cys94 and Cys172 are disulfide-bonded. A helical membrane pass occupies residues 96–116; the sequence is ILGALVVFYPSLALWLLAFIS. Over 117–138 the chain is Cytoplasmic; sequence ADRYMAIVQPKYAKELKNTGKA. Residues 139–159 traverse the membrane as a helical segment; the sequence is VLACGGVWVMTLTTTVPLLLL. The Extracellular portion of the chain corresponds to 160 to 191; the sequence is YEDPDKASSPATCLKISDITHLKAVNVLNFTR. The N-linked (GlcNAc...) asparagine glycan is linked to Asn188. The helical transmembrane segment at 192 to 212 threads the bilayer; the sequence is LIFFFLIPLFIMIGCYVVIIH. The Cytoplasmic portion of the chain corresponds to 213 to 236; sequence SLLRGQTSKLKPKVKEKSIRIIMT. Residues 237 to 257 traverse the membrane as a helical segment; it reads LLLQVLVCFVPFHICFAVLML. The Extracellular portion of the chain corresponds to 258-268; the sequence is QGQENSYSPWG. Residues 269 to 289 form a helical membrane-spanning segment; sequence AFTTFLMNLSTCLDVVLYYIV. Residues 290 to 331 lie on the Cytoplasmic side of the membrane; it reads SKQFQARVISVMLYRNYLRSVRRKSVRSGSLRSLSNMNSEML. The residue at position 322 (Ser322) is a Phosphoserine.

This sequence belongs to the G-protein coupled receptor 1 family. As to expression, expressed in the eye including cornea, retina, iris and ciliary epithelium (at protein level). Expressed in spleen, liver and lymphocytes with highest expression levels in intestinal intraepithelial lymphocytes.

It localises to the cell membrane. It is found in the cytoplasmic vesicle membrane. Its function is as follows. G protein-coupled receptor (GPCR) that plays a role in diverse physiological processes particularly within the immune and nervous systems. Becomes active when triggered by various endogenous ligands including endocannabinoid N-arachidonyl glycine (NAGly), delta-9-tetrahydrocannabinol or resolvin D2/RvD2 derived from the omega-3 fatty acid docosahexaenoic acid (DHA). Upon RvD2 binding, facilitates the resolution of inflammation, aiding in tissue repair and homeostasis. Mechanistically, RvD2 ligation initiates Galphas protein coupling, activation of cAMP-PKA signaling pathway and phosphorylation of STAT3, leading to RvD2-stimulated macrophage phagocytosis. Mediates NAGly-induced process of reorganization of actin filaments and induction of acrosomal exocytosis. Activation by N-arachidonoyl glycine (NAGly) can also induce apoptosis in macrophages. Plays a role in homeostasis of CD8+ subsets of intraepithelial lymphocytes (IELs) (CD8alphaalpha and CD8alphabeta IELs) in small intestine by supporting preferential migration of CD8alphaalpha T-cells to intraepithelial compartment over lamina propria compartment, and by mediating their reconstitution into small intestine after bone marrow transplant. Also participates in hypotensive responses, mediating reduction in intraocular and blood pressure. This Mus musculus (Mouse) protein is N-arachidonyl glycine receptor.